The sequence spans 332 residues: Malate dehydrogenase, cytoplasmic (332 aa).

NAD(+)-binding positions include 16–17, aspartate 43, and glycine 90; that span reads QI. Residue arginine 99 participates in oxaloacetate binding. Glutamine 113 and asparagine 132 together coordinate NAD(+). Residues asparagine 132, arginine 163, histidine 188, and serine 243 each contribute to the oxaloacetate site. Histidine 188 serves as the catalytic Proton acceptor.

This sequence belongs to the LDH/MDH superfamily. MDH type 2 family. As to quaternary structure, monomer. As to expression, expressed constitutively in roots.

It is found in the cell membrane. It catalyses the reaction (S)-malate + NAD(+) = oxaloacetate + NADH + H(+). Functionally, malate dehydrogenase; catalyzes a reversible NAD-dependent dehydrogenase reaction involved in central metabolism and redox homeostasis. This chain is Malate dehydrogenase, cytoplasmic, found in Zea mays (Maize).